The sequence spans 498 residues: ATP synthase subunit beta, chloroplastic (498 aa).

Phosphothreonine is present on Thr-6. Phosphoserine is present on Ser-13. Residue 172 to 179 participates in ATP binding; the sequence is GGAGVGKT.

This sequence belongs to the ATPase alpha/beta chains family. In terms of assembly, F-type ATPases have 2 components, CF(1) - the catalytic core - and CF(0) - the membrane proton channel. CF(1) has five subunits: alpha(3), beta(3), gamma(1), delta(1), epsilon(1). CF(0) has four main subunits: a(1), b(1), b'(1) and c(9-12).

The protein localises to the plastid. Its subcellular location is the chloroplast thylakoid membrane. It catalyses the reaction ATP + H2O + 4 H(+)(in) = ADP + phosphate + 5 H(+)(out). In terms of biological role, produces ATP from ADP in the presence of a proton gradient across the membrane. The catalytic sites are hosted primarily by the beta subunits. The polypeptide is ATP synthase subunit beta, chloroplastic (Barbarea verna (Land cress)).